The following is a 20-amino-acid chain: 26 kDa protein (20 aa).

In Bacillus cereus, this protein is 26 kDa protein.